Consider the following 165-residue polypeptide: 5-formyltetrahydrofolate cyclo-ligase (165 aa).

Residue 4-8 participates in ATP binding; the sequence is KNSLR. Positions 51 and 56 each coordinate substrate. 116 to 124 contacts ATP; the sequence is RIGFGKGYY. D125 contributes to the Mg(2+) binding site. ATP contacts are provided by R126 and W154. D155 serves as a coordination point for Mg(2+).

This sequence belongs to the 5-formyltetrahydrofolate cyclo-ligase family. Monomer or homodimer. The cofactor is Mg(2+).

It localises to the cytoplasm. It carries out the reaction (6S)-5-formyl-5,6,7,8-tetrahydrofolate + ATP = (6R)-5,10-methenyltetrahydrofolate + ADP + phosphate. In terms of biological role, involved in folate metabolism. Catalyzes the irreversible conversion of 5-formyltetrahydrofolate (5-FTHF) to yield 5,10-methenyltetrahydrofolate. In Mycoplasma genitalium (strain ATCC 33530 / DSM 19775 / NCTC 10195 / G37) (Mycoplasmoides genitalium), this protein is 5-formyltetrahydrofolate cyclo-ligase.